We begin with the raw amino-acid sequence, 125 residues long: Protein ApaG (125 aa).

Residues 1–125 (MINSPRVCVQ…FRLAIPSLIN (125 aa)) form the ApaG domain.

This Sodalis glossinidius (strain morsitans) protein is Protein ApaG.